The chain runs to 174 residues: Membrane protein NfeD2 (174 aa).

3 helical membrane passes run 16–36, 47–67, and 72–92; these read LIIA…FSGL, LVLS…LVLP, and LIAL…HIFV.

It belongs to the NfeD family.

Its subcellular location is the cell membrane. It localises to the membrane raft. Functionally, plays a role in assembly of FloT membrane rafts, probably recruited to rafts by FloT. The polypeptide is Membrane protein NfeD2 (Bacillus subtilis (strain 168)).